The primary structure comprises 40 residues: Chitin-binding protein 4 (40 aa).

In terms of processing, N-glycosylated.

Its function is as follows. Chitin-binding protein. Has antifungal activity against C.krusei, C.albicans, C.tropicalis and C.parapsilosis. Has antinociceptive and anti-inflammatory activity in mice. The sequence is that of Chitin-binding protein 4 from Moringa oleifera (Horseradish tree).